Reading from the N-terminus, the 307-residue chain is Pyridoxal 5'-phosphate synthase subunit PdxS (307 aa).

The segment covering 1 to 10 has biased composition (basic residues); the sequence is MRGQPRPKLR. The interval 1 to 20 is disordered; that stretch reads MRGQPRPKLRRMTEQQTGTP. Position 37 (Asp-37) interacts with D-ribose 5-phosphate. Lys-94 serves as the catalytic Schiff-base intermediate with D-ribose 5-phosphate. Gly-166 contacts D-ribose 5-phosphate. Residue Arg-178 participates in D-glyceraldehyde 3-phosphate binding. Residues Gly-227 and 248–249 each bind D-ribose 5-phosphate; that span reads GS.

The protein belongs to the PdxS/SNZ family. In terms of assembly, in the presence of PdxT, forms a dodecamer of heterodimers.

It carries out the reaction aldehydo-D-ribose 5-phosphate + D-glyceraldehyde 3-phosphate + L-glutamine = pyridoxal 5'-phosphate + L-glutamate + phosphate + 3 H2O + H(+). The protein operates within cofactor biosynthesis; pyridoxal 5'-phosphate biosynthesis. Catalyzes the formation of pyridoxal 5'-phosphate from ribose 5-phosphate (RBP), glyceraldehyde 3-phosphate (G3P) and ammonia. The ammonia is provided by the PdxT subunit. Can also use ribulose 5-phosphate and dihydroxyacetone phosphate as substrates, resulting from enzyme-catalyzed isomerization of RBP and G3P, respectively. The polypeptide is Pyridoxal 5'-phosphate synthase subunit PdxS (Deinococcus radiodurans (strain ATCC 13939 / DSM 20539 / JCM 16871 / CCUG 27074 / LMG 4051 / NBRC 15346 / NCIMB 9279 / VKM B-1422 / R1)).